The chain runs to 552 residues: Chaperonin GroEL (552 aa).

ATP contacts are provided by residues 30–33, Lys-51, 87–91, Gly-415, and Asp-496; these read TLGP and DGTTT.

This sequence belongs to the chaperonin (HSP60) family. Forms a cylinder of 14 subunits composed of two heptameric rings stacked back-to-back. Interacts with the co-chaperonin GroES.

It localises to the cytoplasm. The enzyme catalyses ATP + H2O + a folded polypeptide = ADP + phosphate + an unfolded polypeptide.. Its function is as follows. Together with its co-chaperonin GroES, plays an essential role in assisting protein folding. The GroEL-GroES system forms a nano-cage that allows encapsulation of the non-native substrate proteins and provides a physical environment optimized to promote and accelerate protein folding. The polypeptide is Chaperonin GroEL (Paramagnetospirillum magneticum (strain ATCC 700264 / AMB-1) (Magnetospirillum magneticum)).